The sequence spans 505 residues: Protein phosphatase 1J (505 aa).

The segment at 1–103 is disordered; that stretch reads MLNRVRSAVA…PPDTGRRLPW (103 aa). The segment covering 27–50 has biased composition (low complexity); the sequence is DLPNAASAPPAAAPEAPRSPPAKA. Serine 66 and serine 76 each carry phosphoserine. A PPM-type phosphatase domain is found at 104–498; the sequence is STGYAEVINA…DDISVFVIPL (395 aa).

It belongs to the PP2C family. In terms of assembly, interacts with UBE2I/UBC9.

The enzyme catalyses O-phospho-L-seryl-[protein] + H2O = L-seryl-[protein] + phosphate. The catalysed reaction is O-phospho-L-threonyl-[protein] + H2O = L-threonyl-[protein] + phosphate. The chain is Protein phosphatase 1J (PPM1J) from Homo sapiens (Human).